The chain runs to 652 residues: DNA polymerase epsilon subunit B (652 aa).

It belongs to the DNA polymerase epsilon subunit B family. In terms of assembly, heterotetramer. Consists of four subunits: POL2, DPB2, DPB3 and DPB4.

The protein resides in the nucleus. As accessory component of the DNA polymerase epsilon (DNA polymerase II) participates in chromosomal DNA replication. This Yarrowia lipolytica (strain CLIB 122 / E 150) (Yeast) protein is DNA polymerase epsilon subunit B (DPB2).